A 472-amino-acid polypeptide reads, in one-letter code: 3-isopropylmalate dehydratase large subunit (472 aa).

Positions 353, 414, and 417 each coordinate [4Fe-4S] cluster.

It belongs to the aconitase/IPM isomerase family. LeuC type 1 subfamily. Heterodimer of LeuC and LeuD. [4Fe-4S] cluster is required as a cofactor.

It carries out the reaction (2R,3S)-3-isopropylmalate = (2S)-2-isopropylmalate. Its pathway is amino-acid biosynthesis; L-leucine biosynthesis; L-leucine from 3-methyl-2-oxobutanoate: step 2/4. Catalyzes the isomerization between 2-isopropylmalate and 3-isopropylmalate, via the formation of 2-isopropylmaleate. This Acinetobacter baumannii (strain ATCC 17978 / DSM 105126 / CIP 53.77 / LMG 1025 / NCDC KC755 / 5377) protein is 3-isopropylmalate dehydratase large subunit.